The sequence spans 308 residues: MSKTAIIFPGQGAQKVGMAQDLYNNNDQATEILTSAANTLDFDILETMFTDEEGKLGETENTQPALLTHSSALLAALKNLNPDFTMGHSLGEYSSLVAADVLSFEDAVKIVRKRGQLMAQAFPSGVGSMAAVLGLDFDKVDEICKSLSSDDKIIEPANINCPGQIVVSGHKALIDELVEKGKSLGAKRVMPLAVSGPFHSSLMKVIEEDFSSYINQFEWRDAKFPVVQNVNAQGETDKEVIKSNMVKQLYSPVQFINSTEWLIDQGVDHFIEIGPGKVLSGLIKKINRDVKLTSIQTLEDVKGWNEND.

Catalysis depends on residues Ser89 and His199.

Belongs to the FabD family.

It carries out the reaction holo-[ACP] + malonyl-CoA = malonyl-[ACP] + CoA. The protein operates within lipid metabolism; fatty acid biosynthesis. The protein is Malonyl CoA-acyl carrier protein transacylase (fabD) of Staphylococcus aureus (strain MRSA252).